A 270-amino-acid polypeptide reads, in one-letter code: ATP synthase subunit b 1 (270 aa).

Residues 2–22 (LIDWFTVIAQLINFLVLVWLL) form a helical membrane-spanning segment.

The protein belongs to the ATPase B chain family. As to quaternary structure, F-type ATPases have 2 components, F(1) - the catalytic core - and F(0) - the membrane proton channel. F(1) has five subunits: alpha(3), beta(3), gamma(1), delta(1), epsilon(1). F(0) has three main subunits: a(1), b(2) and c(10-14). The alpha and beta chains form an alternating ring which encloses part of the gamma chain. F(1) is attached to F(0) by a central stalk formed by the gamma and epsilon chains, while a peripheral stalk is formed by the delta and b chains.

The protein resides in the cell inner membrane. Its function is as follows. F(1)F(0) ATP synthase produces ATP from ADP in the presence of a proton or sodium gradient. F-type ATPases consist of two structural domains, F(1) containing the extramembraneous catalytic core and F(0) containing the membrane proton channel, linked together by a central stalk and a peripheral stalk. During catalysis, ATP synthesis in the catalytic domain of F(1) is coupled via a rotary mechanism of the central stalk subunits to proton translocation. Functionally, component of the F(0) channel, it forms part of the peripheral stalk, linking F(1) to F(0). In Marinomonas sp. (strain MWYL1), this protein is ATP synthase subunit b 1.